We begin with the raw amino-acid sequence, 271 residues long: ATP-dependent Clp protease proteolytic subunit 6, chloroplastic (271 aa).

Positions 1-30 are disordered; it reads MAGLAISPPLGLSFSSRTRNPKPTSFLSHN. The N-terminal 77 residues, 1 to 77, are a transit peptide targeting the chloroplast; that stretch reads MAGLAISPPL…KAPRFGVIEA (77 aa). Over residues 13–30 the composition is skewed to polar residues; sequence SFSSRTRNPKPTSFLSHN. The Nucleophile role is filled by Ser-175. His-200 is a catalytic residue.

Belongs to the peptidase S14 family. Component of the chloroplastic Clp protease core complex which consist of at least 16 proteins: CLPP4 (3 copies), CLPP5 (3 copies), CLPR4 (2 copies), ClpP1 (1 copy), CLPP6 (1 copy), CLPR2 (1 copy), CLPT1 (1 copy), CLPT2 (1 copy) and 3 copies of CLPP3 and/or CLPR1 and/or CLPR3. The core complex is organized in two heptameric rings, one containing CLPP3,4,5,6 in a 1:2:3:1 ratio and the other CLPP1 and CLPR1,2,3,4 in a 3:1:1:1:1 ratio. In terms of tissue distribution, mostly expressed in leaves. Also detected in stems, and to a lower extent, in roots (at protein level).

The protein resides in the plastid. Its subcellular location is the chloroplast stroma. The enzyme catalyses Hydrolysis of proteins to small peptides in the presence of ATP and magnesium. alpha-casein is the usual test substrate. In the absence of ATP, only oligopeptides shorter than five residues are hydrolyzed (such as succinyl-Leu-Tyr-|-NHMec, and Leu-Tyr-Leu-|-Tyr-Trp, in which cleavage of the -Tyr-|-Leu- and -Tyr-|-Trp bonds also occurs).. Cleaves peptides in various proteins in a process that requires ATP hydrolysis. Has a chymotrypsin-like activity. Plays a major role in the degradation of misfolded proteins. Essential protein required for chloroplast development and integrity. The polypeptide is ATP-dependent Clp protease proteolytic subunit 6, chloroplastic (Arabidopsis thaliana (Mouse-ear cress)).